Here is a 98-residue protein sequence, read N- to C-terminus: NADH-ubiquinone oxidoreductase chain 4L (98 aa).

3 helical membrane passes run 1 to 21, 29 to 49, and 61 to 81; these read MSMVYFNIFLAFIVSLVGLLM, SLLCLEGMMLSLFVMMSVTIL, and IILLVFAACEAALGLSLLVMV.

This sequence belongs to the complex I subunit 4L family. Core subunit of respiratory chain NADH dehydrogenase (Complex I) which is composed of 45 different subunits.

Its subcellular location is the mitochondrion inner membrane. The catalysed reaction is a ubiquinone + NADH + 5 H(+)(in) = a ubiquinol + NAD(+) + 4 H(+)(out). Its function is as follows. Core subunit of the mitochondrial membrane respiratory chain NADH dehydrogenase (Complex I) which catalyzes electron transfer from NADH through the respiratory chain, using ubiquinone as an electron acceptor. Part of the enzyme membrane arm which is embedded in the lipid bilayer and involved in proton translocation. The sequence is that of NADH-ubiquinone oxidoreductase chain 4L (MT-ND4L) from Callorhinus ursinus (Northern fur seal).